The primary structure comprises 340 residues: Mitochondrial calcium uniporter regulator 1 (340 aa).

Positions Met-1–Arg-44 are disordered. Residues Met-1–Pro-54 lie on the Mitochondrial intermembrane side of the membrane. The helical transmembrane segment at Leu-55–Ala-74 threads the bilayer. Topologically, residues Pro-75 to Asp-316 are mitochondrial matrix. Positions Ala-197–Ala-291 form a coiled coil. At Lys-204 the chain carries N6-acetyllysine. The helical transmembrane segment at Thr-317–Trp-339 threads the bilayer. Residue Ile-340 is a topological domain, mitochondrial intermembrane.

It belongs to the CCDC90 family. Interacts (via coiled coil regions) with MCU; the interaction is direct. Interacts with SMDT1/EMRE; the interaction is direct. Interacts with PPIF.

It localises to the mitochondrion inner membrane. Key regulator of mitochondrial calcium uniporter (MCU) required for calcium entry into mitochondrion. Plays a direct role in uniporter-mediated calcium uptake via a direct interaction with MCU. Probably involved in the assembly of the membrane components of the uniporter complex (uniplex). The polypeptide is Mitochondrial calcium uniporter regulator 1 (Mus musculus (Mouse)).